Reading from the N-terminus, the 452-residue chain is Tripartite motif-containing protein 51 (452 aa).

Residues 15–56 (CPICMNYFLDPVTIDCGHSFCRPCLYLNWQDTAVLAQCSECK) form an RING-type zinc finger. The B box-type zinc finger occupies 88 to 129 (SEEQICGMHRETKKMFCEVDKSLLCLPCSNSQEHRNHIHCPI). Zn(2+) is bound by residues C93, H96, C115, and H121. Residues 269–452 (ELSAGPITGL…LRPIFCCSHF (184 aa)) enclose the B30.2/SPRY domain.

The protein belongs to the TRIM/RBCC family.

The sequence is that of Tripartite motif-containing protein 51 (TRIM51) from Homo sapiens (Human).